The primary structure comprises 247 residues: Pulmonary surfactant-associated protein A (247 aa).

Positions 1 to 19 (MWCSLALILILVTVSGIMC) are cleaved as a signal peptide. Asn20 is a glycosylation site (N-linked (GlcNAc...) asparagine). One can recognise a Collagen-like domain in the interval 27 to 99 (GSPGIPGTPG…PGERGPPGLP (73 aa)). Residues Pro29, Pro32, Pro35, Pro41, Pro53, Pro56, Pro62, Pro66, and Pro69 each carry the 4-hydroxyproline modification. Residues 32–101 (PGTPGSHGLP…ERGPPGLPAS (70 aa)) form a disordered region. Basic and acidic residues predominate over residues 41–50 (PGRDGRDGVK). The segment covering 53-64 (PGPPGPMGPPGV) has biased composition (pro residues). Positions 83–92 (ERGDKGDPGE) are enriched in basic and acidic residues. A C-type lectin domain is found at 131-247 (LAVGDKVFAT…LQSRLTICEF (117 aa)). 2 disulfides stabilise this stretch: Cys154/Cys245 and Cys223/Cys237. Asn206 is a glycosylation site (N-linked (GlcNAc...) asparagine). Residues Glu214, Arg216, Asn233, and Asp234 each contribute to the Ca(2+) site.

Belongs to the SFTPA family. In terms of assembly, oligomeric complex of 6 set of homotrimers.

Its subcellular location is the secreted. The protein localises to the extracellular space. It is found in the extracellular matrix. It localises to the surface film. Functionally, in presence of calcium ions, it binds to surfactant phospholipids and contributes to lower the surface tension at the air-liquid interface in the alveoli of the mammalian lung and is essential for normal respiration. Enhances the expression of MYO18A/SP-R210 on alveolar macrophages. The protein is Pulmonary surfactant-associated protein A (SFTPA1) of Cavia porcellus (Guinea pig).